Reading from the N-terminus, the 231-residue chain is Pathogenesis-related thaumatin-like protein 3.7 (231 aa).

The N-terminal stretch at 1-27 is a signal peptide; that stretch reads MATVSDLALLLVAGLVAISLHMQEAGA. 8 disulfide bridges follow: Cys36/Cys230, Cys77/Cys87, Cys92/Cys98, Cys143/Cys218, Cys148/Cys201, Cys156/Cys166, Cys170/Cys179, and Cys180/Cys188.

This sequence belongs to the thaumatin family.

May be involved in disease resistance. In Cryptomeria japonica (Japanese cedar), this protein is Pathogenesis-related thaumatin-like protein 3.7.